We begin with the raw amino-acid sequence, 538 residues long: Chaperonin GroEL (538 aa).

ATP contacts are provided by residues 29–32 (TLGP), 86–90 (DGTTT), G413, 476–478 (NAA), and D492.

The protein belongs to the chaperonin (HSP60) family. In terms of assembly, forms a cylinder of 14 subunits composed of two heptameric rings stacked back-to-back. Interacts with the co-chaperonin GroES.

The protein localises to the cytoplasm. The enzyme catalyses ATP + H2O + a folded polypeptide = ADP + phosphate + an unfolded polypeptide.. Functionally, together with its co-chaperonin GroES, plays an essential role in assisting protein folding. The GroEL-GroES system forms a nano-cage that allows encapsulation of the non-native substrate proteins and provides a physical environment optimized to promote and accelerate protein folding. This is Chaperonin GroEL from Bacillus sp. (strain PS3).